Reading from the N-terminus, the 460-residue chain is Crocetin glucosyltransferase 2 (460 aa).

Histidine 19 acts as the Proton acceptor in catalysis. Residue histidine 19 coordinates an anthocyanidin. UDP-alpha-D-glucose contacts are provided by threonine 133, glutamine 333, histidine 348, tryptophan 351, asparagine 352, serine 353, glutamate 356, aspartate 372, and glutamine 373.

The protein belongs to the UDP-glycosyltransferase family. In terms of tissue distribution, mainly expressed in fully developed stigmas.

It carries out the reaction crocetin + UDP-alpha-D-glucose = beta-D-glucosyl crocetin + UDP. It catalyses the reaction beta-D-glucosyl crocetin + UDP-alpha-D-glucose = bis(beta-D-glucosyl) crocetin + UDP. The enzyme catalyses beta-D-gentiobiosyl crocetin + UDP-alpha-D-glucose = beta-D-gentiobiosyl beta-D-glucosyl crocetin + UDP. Its function is as follows. Crocetin glucosyltransferase involved in the synthesis of crocin, one of the apocarotenoids responsible for the color and bitter taste of saffron. This chain is Crocetin glucosyltransferase 2 (GLT2), found in Crocus sativus (Saffron).